The chain runs to 456 residues: Bifunctional protein GlmU (456 aa).

The segment at 1 to 229 (MYKCALILAA…FEEILGVNSR (229 aa)) is pyrophosphorylase. UDP-N-acetyl-alpha-D-glucosamine contacts are provided by residues 8–11 (LAAG), K22, Q73, and 78–79 (GT). Position 103 (D103) interacts with Mg(2+). UDP-N-acetyl-alpha-D-glucosamine-binding residues include G140, E155, N170, and N227. N227 serves as a coordination point for Mg(2+). Positions 230-250 (LQLCQVGKVMQKRINEKHMEN) are linker. Residues 251–456 (GSTLIDPDNT…GWVDKKGLLK (206 aa)) are N-acetyltransferase. Residues R332 and K350 each contribute to the UDP-N-acetyl-alpha-D-glucosamine site. H362 functions as the Proton acceptor in the catalytic mechanism. The UDP-N-acetyl-alpha-D-glucosamine site is built by Y365 and N376. Acetyl-CoA contacts are provided by residues 385–386 (NY), A422, and R439.

This sequence in the N-terminal section; belongs to the N-acetylglucosamine-1-phosphate uridyltransferase family. In the C-terminal section; belongs to the transferase hexapeptide repeat family. As to quaternary structure, homotrimer. It depends on Mg(2+) as a cofactor.

The protein localises to the cytoplasm. It carries out the reaction alpha-D-glucosamine 1-phosphate + acetyl-CoA = N-acetyl-alpha-D-glucosamine 1-phosphate + CoA + H(+). The enzyme catalyses N-acetyl-alpha-D-glucosamine 1-phosphate + UTP + H(+) = UDP-N-acetyl-alpha-D-glucosamine + diphosphate. The protein operates within nucleotide-sugar biosynthesis; UDP-N-acetyl-alpha-D-glucosamine biosynthesis; N-acetyl-alpha-D-glucosamine 1-phosphate from alpha-D-glucosamine 6-phosphate (route II): step 2/2. It participates in nucleotide-sugar biosynthesis; UDP-N-acetyl-alpha-D-glucosamine biosynthesis; UDP-N-acetyl-alpha-D-glucosamine from N-acetyl-alpha-D-glucosamine 1-phosphate: step 1/1. It functions in the pathway bacterial outer membrane biogenesis; LPS lipid A biosynthesis. Its function is as follows. Catalyzes the last two sequential reactions in the de novo biosynthetic pathway for UDP-N-acetylglucosamine (UDP-GlcNAc). The C-terminal domain catalyzes the transfer of acetyl group from acetyl coenzyme A to glucosamine-1-phosphate (GlcN-1-P) to produce N-acetylglucosamine-1-phosphate (GlcNAc-1-P), which is converted into UDP-GlcNAc by the transfer of uridine 5-monophosphate (from uridine 5-triphosphate), a reaction catalyzed by the N-terminal domain. The polypeptide is Bifunctional protein GlmU (Clostridium acetobutylicum (strain ATCC 824 / DSM 792 / JCM 1419 / IAM 19013 / LMG 5710 / NBRC 13948 / NRRL B-527 / VKM B-1787 / 2291 / W)).